The sequence spans 512 residues: rRNA N(6)-adenosine-methyltransferase ZCCHC4 (512 aa).

Positions 39, 41, 63, 72, 124, 127, 139, and 142 each coordinate Zn(2+). The segment at 39–81 (CPHGPTLLFVKVNQGKEETRKFYACSACRDRKDCNFFQWEDEK) adopts a GRF-type zinc-finger fold. S-adenosyl-L-methionine is bound by residues 171-174 (QYLF), R201, D223, 241-242 (NM), and D274. The tract at residues 335–355 (QVDYDNHALYKHGKTGRKQSP) is regulatory loop. 16 residues coordinate Zn(2+): C378, C381, H391, C392, C395, C398, H408, C409, C412, C415, H422, C423, C426, C429, H434, and C436. A DHHC domain is found at 393-445 (VHCNSCTSKDGRKWSHCFLCKKCVKPSWIHCNTCNRCALPDHSCLGPKDGCFI). The segment at 441-458 (DGCFICGALDHKRSNCPN) adopts a CCHC-type zinc-finger fold.

Belongs to the ZCCHC4 family. As to quaternary structure, interacts with components of the ASC-1 complex TRIP4, ASCC1, ASCC2 and ASCC3. Interact with AHCYL1 and AHCYL2. Interact with YTHDC2.

It is found in the cytoplasm. The protein resides in the nucleus. Its subcellular location is the nucleolus. It catalyses the reaction adenosine(4220) in 28S rRNA + S-adenosyl-L-methionine = N(6)-methyladenosine(4220) in 28S rRNA + S-adenosyl-L-homocysteine + H(+). RRNA N6-methyltransferase that specifically methylates the adenine in position 4220 of 28S rRNA. N6-methylation of adenine(4220) in 28S rRNA is required for translation. The chain is rRNA N(6)-adenosine-methyltransferase ZCCHC4 from Mus musculus (Mouse).